Consider the following 147-residue polypeptide: Ponticulin-like protein C3 (147 aa).

The first 20 residues, 1–20, serve as a signal peptide directing secretion; the sequence is MKFTKSLLLLIVAVFASSNA. Asn118 carries GPI-like-anchor amidated asparagine lipidation. The N-linked (GlcNAc...) asparagine glycan is linked to Asn118. Positions 119–147 are cleaved as a propeptide — removed in mature form; it reads SSESDSSDSTRIGASFALFALALLSMLAL.

This sequence belongs to the ponticulin family. The GPI-like-anchor contains a phosphoceramide group, rather than a phosphatidyl group.

The protein resides in the cell membrane. This is Ponticulin-like protein C3 (ponC3) from Dictyostelium discoideum (Social amoeba).